We begin with the raw amino-acid sequence, 359 residues long: Putative gluconeogenesis factor (359 aa).

Residues 317 to 359 (VGNQDSSAPTVAATEQIRLDGKRPQTGVNGPVGKGPRGDDAWR) form a disordered region.

This sequence belongs to the gluconeogenesis factor family.

The protein resides in the cytoplasm. Its function is as follows. Required for morphogenesis under gluconeogenic growth conditions. In Mycobacterium leprae (strain TN), this protein is Putative gluconeogenesis factor.